The chain runs to 181 residues: ATP-dependent protease subunit HslV (181 aa).

Threonine 9 is an active-site residue. Residues alanine 166, cysteine 169, and threonine 172 each contribute to the Na(+) site.

It belongs to the peptidase T1B family. HslV subfamily. As to quaternary structure, a double ring-shaped homohexamer of HslV is capped on each side by a ring-shaped HslU homohexamer. The assembly of the HslU/HslV complex is dependent on binding of ATP.

It is found in the cytoplasm. The enzyme catalyses ATP-dependent cleavage of peptide bonds with broad specificity.. Its activity is regulated as follows. Allosterically activated by HslU binding. Functionally, protease subunit of a proteasome-like degradation complex believed to be a general protein degrading machinery. The protein is ATP-dependent protease subunit HslV of Staphylococcus aureus (strain bovine RF122 / ET3-1).